The sequence spans 189 residues: Crossover junction endodeoxyribonuclease RuvC (189 aa).

Catalysis depends on residues aspartate 7, glutamate 68, and aspartate 141. Mg(2+)-binding residues include aspartate 7, glutamate 68, and aspartate 141.

Belongs to the RuvC family. Homodimer which binds Holliday junction (HJ) DNA. The HJ becomes 2-fold symmetrical on binding to RuvC with unstacked arms; it has a different conformation from HJ DNA in complex with RuvA. In the full resolvosome a probable DNA-RuvA(4)-RuvB(12)-RuvC(2) complex forms which resolves the HJ. It depends on Mg(2+) as a cofactor.

The protein localises to the cytoplasm. The catalysed reaction is Endonucleolytic cleavage at a junction such as a reciprocal single-stranded crossover between two homologous DNA duplexes (Holliday junction).. Its function is as follows. The RuvA-RuvB-RuvC complex processes Holliday junction (HJ) DNA during genetic recombination and DNA repair. Endonuclease that resolves HJ intermediates. Cleaves cruciform DNA by making single-stranded nicks across the HJ at symmetrical positions within the homologous arms, yielding a 5'-phosphate and a 3'-hydroxyl group; requires a central core of homology in the junction. The consensus cleavage sequence is 5'-(A/T)TT(C/G)-3'. Cleavage occurs on the 3'-side of the TT dinucleotide at the point of strand exchange. HJ branch migration catalyzed by RuvA-RuvB allows RuvC to scan DNA until it finds its consensus sequence, where it cleaves and resolves the cruciform DNA. The chain is Crossover junction endodeoxyribonuclease RuvC from Nocardia farcinica (strain IFM 10152).